The chain runs to 145 residues: Large ribosomal subunit protein uL11 (145 aa).

This sequence belongs to the universal ribosomal protein uL11 family. Part of the ribosomal stalk of the 50S ribosomal subunit. Interacts with L10 and the large rRNA to form the base of the stalk. L10 forms an elongated spine to which L12 dimers bind in a sequential fashion forming a multimeric L10(L12)X complex. In terms of processing, one or more lysine residues are methylated.

Forms part of the ribosomal stalk which helps the ribosome interact with GTP-bound translation factors. This chain is Large ribosomal subunit protein uL11, found in Rubrobacter xylanophilus (strain DSM 9941 / JCM 11954 / NBRC 16129 / PRD-1).